Consider the following 119-residue polypeptide: EF-hand calcium-binding domain-containing protein 2 (119 aa).

The signal sequence occupies residues 1–22 (MKVAVVLIVVLVVMMIGQETDS). The region spanning 82-117 (VDDNGFVEFKATYDVDGDGVVQVEEYETVVELTENL) is the EF-hand domain. D95, D97, D99, and E106 together coordinate Ca(2+).

As to expression, component of the acid-soluble organic matrix of calcified layers of the shell (at protein level).

Its subcellular location is the secreted. This is EF-hand calcium-binding domain-containing protein 2 from Lottia gigantea (Giant owl limpet).